The following is a 283-amino-acid chain: Prepilin leader peptidase/N-methyltransferase (283 aa).

The next 7 helical transmembrane spans lie at 13 to 33 (VWLL…NVVI), 106 to 126 (WRYP…GLLW), 128 to 148 (PGLA…LAAI), 153 to 173 (QLLP…FNLA), 176 to 196 (FVPL…LWLI), 216 to 236 (LLAA…VLIA), and 259 to 279 (LAFG…NVLG).

Belongs to the peptidase A24 family.

The protein resides in the cell inner membrane. The enzyme catalyses Typically cleaves a -Gly-|-Phe- bond to release an N-terminal, basic peptide of 5-8 residues from type IV prepilin, and then N-methylates the new N-terminal amino group, the methyl donor being S-adenosyl-L-methionine.. In terms of biological role, plays a role in type II pseudopili formation by proteolytically removing the leader sequence from substrate proteins and subsequently monomethylating the alpha-amino group of the newly exposed N-terminal phenylalanine. Substrates include proteins required for biogenesis of the type II general secretory apparatus. In Dickeya chrysanthemi (Pectobacterium chrysanthemi), this protein is Prepilin leader peptidase/N-methyltransferase (outO).